We begin with the raw amino-acid sequence, 473 residues long: ATP synthase subunit beta (473 aa).

Residue 153-160 coordinates ATP; the sequence is GGAGVGKT.

This sequence belongs to the ATPase alpha/beta chains family. As to quaternary structure, F-type ATPases have 2 components, CF(1) - the catalytic core - and CF(0) - the membrane proton channel. CF(1) has five subunits: alpha(3), beta(3), gamma(1), delta(1), epsilon(1). CF(0) has three main subunits: a(1), b(2) and c(9-12). The alpha and beta chains form an alternating ring which encloses part of the gamma chain. CF(1) is attached to CF(0) by a central stalk formed by the gamma and epsilon chains, while a peripheral stalk is formed by the delta and b chains.

The protein resides in the cell inner membrane. The enzyme catalyses ATP + H2O + 4 H(+)(in) = ADP + phosphate + 5 H(+)(out). Functionally, produces ATP from ADP in the presence of a proton gradient across the membrane. The catalytic sites are hosted primarily by the beta subunits. In Rickettsia conorii (strain ATCC VR-613 / Malish 7), this protein is ATP synthase subunit beta.